A 403-amino-acid polypeptide reads, in one-letter code: Flagellar hook protein FlgE (403 aa).

Belongs to the flagella basal body rod proteins family.

The protein resides in the bacterial flagellum basal body. The polypeptide is Flagellar hook protein FlgE (flgE) (Salmonella typhi).